The chain runs to 144 residues: Large ribosomal subunit protein uL15 (144 aa).

The tract at residues 1 to 49 is disordered; that stretch reads MRLNTLSPAAGSKSAPKRVGRGIGSGLGKTAGRGHKGQKSRSGGGVRVG. The span at 21–31 shows a compositional bias: gly residues; sequence RGIGSGLGKTA.

The protein belongs to the universal ribosomal protein uL15 family. As to quaternary structure, part of the 50S ribosomal subunit.

Functionally, binds to the 23S rRNA. This is Large ribosomal subunit protein uL15 from Shewanella denitrificans (strain OS217 / ATCC BAA-1090 / DSM 15013).